Here is a 131-residue protein sequence, read N- to C-terminus: Methylglyoxal synthase (131 aa).

Positions M1–K131 constitute an MGS-like domain. Substrate-binding positions include H8, K12, T34–T37, and S54–G55. Catalysis depends on D60, which acts as the Proton donor/acceptor. Residue H87 coordinates substrate.

This sequence belongs to the methylglyoxal synthase family.

The enzyme catalyses dihydroxyacetone phosphate = methylglyoxal + phosphate. Its function is as follows. Catalyzes the formation of methylglyoxal from dihydroxyacetone phosphate. The sequence is that of Methylglyoxal synthase from Bacillus cereus (strain AH820).